The following is a 133-amino-acid chain: MTYNEKIISMNNDLLDHQHKELFEISKKLSLMNQRHVGTKELKIVLRELLIMINRHFSDEEAFMREIEYPYINHHTRIHRKIILEIEEIIISEAKFVNIMTEKLNLVVQDFIFKHTAKEDSKIVKYYEEKFKK.

The Fe cation site is built by His19, His56, Glu60, His75, His79, His115, and Asp120.

It belongs to the hemerythrin family. As to quaternary structure, monomer.

Oxygen-binding protein. May be involved in a storage mechanism or for delivery to oxygen-requiring enzymes. The oxygen-binding site contains two iron atoms. The sequence is that of Bacteriohemerythrin from Campylobacter jejuni subsp. jejuni serotype O:6 (strain 81116 / NCTC 11828).